Here is a 727-residue protein sequence, read N- to C-terminus: Transcription activator of gluconeogenesis TRV_01442 (727 aa).

Residues 1 to 32 show a composition bias toward polar residues; it reads MSPHQTTGQESDNMTVNGENAQASSQYIQSNE. A disordered region spans residues 1–62; it reads MSPHQTTGQE…PSRPKRKKAK (62 aa). The segment covering 39–55 has biased composition (basic and acidic residues); sequence ATEKKASAAKAAKDPSR. The segment at residues 65 to 93 is a DNA-binding region (zn(2)-C6 fungal-type); the sequence is CYACQRGHLTCGDERPCQRCIKRGFQDAC. 3 stretches are compositionally biased toward polar residues: residues 129-213, 267-277, and 361-379; these read NNVN…TPSA, PSDSGAQRGSI, and MMTTSSATFEDTTNSGAFN. 5 disordered regions span residues 129–224, 264–297, 353–399, 533–567, and 627–666; these read NNVN…FNST, DTPPSDSGAQRGSIGQNGSGTFGLTGSSFSESPS, SPAS…STPQ, NHNVNTGGSSGLMTGSTSRGSYTPRPYSSEVYNSS, and GSNGEADAGLNGEATSNETNELNGSHTNGATTNGRGQRRW. 2 stretches are compositionally biased toward low complexity: residues 380–399 and 543–553; these read SRQNVPVSQQRQQPVVSTPQ and GLMTGSTSRGS. Over residues 639–661 the composition is skewed to polar residues; the sequence is EATSNETNELNGSHTNGATTNGR.

It belongs to the ERT1/acuK family.

The protein resides in the nucleus. In terms of biological role, transcription factor which regulates nonfermentable carbon utilization. Activator of gluconeogenetic genes. The polypeptide is Transcription activator of gluconeogenesis TRV_01442 (Trichophyton verrucosum (strain HKI 0517)).